A 281-amino-acid chain; its full sequence is Shikimate dehydrogenase (NADP(+)) (281 aa).

Residues 14–16 and Thr61 contribute to the shikimate site; that span reads SRS. The Proton acceptor role is filled by Lys65. 2 residues coordinate shikimate: Asn86 and Asp101. NADP(+)-binding positions include 127 to 131, 151 to 156, and Val216; these read GAGGA and NRTLAR. Position 218 (Tyr218) interacts with shikimate. Residue Gly239 coordinates NADP(+).

The protein belongs to the shikimate dehydrogenase family. Homodimer.

It carries out the reaction shikimate + NADP(+) = 3-dehydroshikimate + NADPH + H(+). It participates in metabolic intermediate biosynthesis; chorismate biosynthesis; chorismate from D-erythrose 4-phosphate and phosphoenolpyruvate: step 4/7. Involved in the biosynthesis of the chorismate, which leads to the biosynthesis of aromatic amino acids. Catalyzes the reversible NADPH linked reduction of 3-dehydroshikimate (DHSA) to yield shikimate (SA). In Azorhizobium caulinodans (strain ATCC 43989 / DSM 5975 / JCM 20966 / LMG 6465 / NBRC 14845 / NCIMB 13405 / ORS 571), this protein is Shikimate dehydrogenase (NADP(+)).